A 369-amino-acid polypeptide reads, in one-letter code: 3-isopropylmalate dehydrogenase (369 aa).

4 residues coordinate substrate: R98, R108, R136, and D227. The Mg(2+) site is built by D227, D251, and D255. 290-302 is a binding site for NAD(+); that stretch reads GSAPDIAGKGIAN.

The protein belongs to the isocitrate and isopropylmalate dehydrogenases family. LeuB type 1 subfamily. As to quaternary structure, homodimer. Mg(2+) serves as cofactor. The cofactor is Mn(2+).

It localises to the cytoplasm. It catalyses the reaction (2R,3S)-3-isopropylmalate + NAD(+) = 4-methyl-2-oxopentanoate + CO2 + NADH. It participates in amino-acid biosynthesis; L-leucine biosynthesis; L-leucine from 3-methyl-2-oxobutanoate: step 3/4. Catalyzes the oxidation of 3-carboxy-2-hydroxy-4-methylpentanoate (3-isopropylmalate) to 3-carboxy-4-methyl-2-oxopentanoate. The product decarboxylates to 4-methyl-2 oxopentanoate. This chain is 3-isopropylmalate dehydrogenase, found in Gluconobacter oxydans (strain 621H) (Gluconobacter suboxydans).